Consider the following 387-residue polypeptide: S-adenosylmethionine synthase (387 aa).

Histidine 19 contributes to the ATP binding site. Residue aspartate 21 participates in Mg(2+) binding. Glutamate 47 contributes to the K(+) binding site. Position 103 (glutamine 103) interacts with L-methionine. A flexible loop region spans residues 103 to 113 (QSPDIAQGVEL). Residues 167 to 169 (DMK), 233 to 234 (RF), aspartate 242, 248 to 249 (RK), alanine 265, and lysine 269 each bind ATP. Aspartate 242 contacts L-methionine. Residue lysine 273 coordinates L-methionine.

This sequence belongs to the AdoMet synthase family. Homotetramer; dimer of dimers. Requires Mg(2+) as cofactor. The cofactor is K(+).

The protein localises to the cytoplasm. It catalyses the reaction L-methionine + ATP + H2O = S-adenosyl-L-methionine + phosphate + diphosphate. Its pathway is amino-acid biosynthesis; S-adenosyl-L-methionine biosynthesis; S-adenosyl-L-methionine from L-methionine: step 1/1. Functionally, catalyzes the formation of S-adenosylmethionine (AdoMet) from methionine and ATP. The overall synthetic reaction is composed of two sequential steps, AdoMet formation and the subsequent tripolyphosphate hydrolysis which occurs prior to release of AdoMet from the enzyme. This chain is S-adenosylmethionine synthase, found in Mycoplasma mycoides subsp. mycoides SC (strain CCUG 32753 / NCTC 10114 / PG1).